The primary structure comprises 467 residues: Chromosomal replication initiator protein DnaA (467 aa).

A domain I, interacts with DnaA modulators region spans residues 1-90; the sequence is MSLSLWQQCL…KPVTQTPQAA (90 aa). The tract at residues 91 to 130 is domain II; it reads VTSNVAAPAQVAQTQPQRAAPSTRSGWDNVPAPAEPTYRS. Residues 98–111 are compositionally biased toward low complexity; the sequence is PAQVAQTQPQRAAP. The interval 98–119 is disordered; it reads PAQVAQTQPQRAAPSTRSGWDN. The domain III, AAA+ region stretch occupies residues 131–347; sequence NVNVKHTFDN…GALNRVIANA (217 aa). Positions 175, 177, 178, and 179 each coordinate ATP. Residues 348-467 form a domain IV, binds dsDNA region; the sequence is NFTGRAITID…FSNLIRTLSS (120 aa).

This sequence belongs to the DnaA family. As to quaternary structure, oligomerizes as a right-handed, spiral filament on DNA at oriC.

The protein localises to the cytoplasm. Functionally, plays an essential role in the initiation and regulation of chromosomal replication. ATP-DnaA binds to the origin of replication (oriC) to initiate formation of the DNA replication initiation complex once per cell cycle. Binds the DnaA box (a 9 base pair repeat at the origin) and separates the double-stranded (ds)DNA. Forms a right-handed helical filament on oriC DNA; dsDNA binds to the exterior of the filament while single-stranded (ss)DNA is stabiized in the filament's interior. The ATP-DnaA-oriC complex binds and stabilizes one strand of the AT-rich DNA unwinding element (DUE), permitting loading of DNA polymerase. After initiation quickly degrades to an ADP-DnaA complex that is not apt for DNA replication. Binds acidic phospholipids. This chain is Chromosomal replication initiator protein DnaA, found in Shigella sonnei (strain Ss046).